We begin with the raw amino-acid sequence, 396 residues long: Serpin-ZXA (396 aa).

Residues 343–367 form an RCL region; that stretch reads GTEAAAATAAVITLRSAPIAEDFVA.

Belongs to the serpin family.

Probable serine protease inhibitor. This is Serpin-ZXA from Oryza sativa subsp. japonica (Rice).